Consider the following 131-residue polypeptide: Fumarate reductase subunit C (131 aa).

A run of 3 helical transmembrane segments spans residues 30–50, 61–81, and 110–130; these read EGTA…LFAL, IGFL…AAAL, and IKGL…VALF.

This sequence belongs to the FrdC family. Part of an enzyme complex containing four subunits: a flavoprotein (FrdA), an iron-sulfur protein (FrdB), and two hydrophobic anchor proteins (FrdC and FrdD).

The protein localises to the cell inner membrane. In terms of biological role, two distinct, membrane-bound, FAD-containing enzymes are responsible for the catalysis of fumarate and succinate interconversion; fumarate reductase is used in anaerobic growth, and succinate dehydrogenase is used in aerobic growth. Anchors the catalytic components of the fumarate reductase complex to the cell inner membrane, binds quinones. In Klebsiella pneumoniae (strain 342), this protein is Fumarate reductase subunit C.